Here is a 767-residue protein sequence, read N- to C-terminus: Protein NLP3 (767 aa).

3 disordered regions span residues 462–494, 590–622, and 646–672; these read ATPP…RKTK, INPT…CSSE, and HEDQ…KAKD. Residues 482–566 enclose the RWP-RK domain; the sequence is SASSLENRKR…MDSVEGVQGS (85 aa). Positions 485–506 form a coiled coil; the sequence is SLENRKRKTKAEKDITLDTLRQ. Composition is skewed to low complexity over residues 604–622 and 655–667; these read PSSS…CSSE and TSSL…ATTP. In terms of domain architecture, PB1 spans 673–759; sequence GMKVKAMFGD…ETIRILVHHP (87 aa).

It localises to the nucleus. In terms of biological role, probable transcription factor. This Arabidopsis thaliana (Mouse-ear cress) protein is Protein NLP3 (NLP3).